A 199-amino-acid chain; its full sequence is Cytochrome c oxidase subunit 2 (199 aa).

Residues 1–13 form a helical membrane-spanning segment; it reads AICSLVLYLLTLM. The Mitochondrial matrix segment spans residues 14 to 26; it reads LMEKLSSNTVDAQ. A helical membrane pass occupies residues 27-54; it reads EVELIWTILPAIVLILLALPSLQILYMM. The Mitochondrial intermembrane segment spans residues 55 to 199; it reads DEIDEPDLTL…SSLLSISSSL (145 aa). Cu cation-binding residues include histidine 128, cysteine 163, glutamate 165, cysteine 167, histidine 171, and methionine 174. Glutamate 165 lines the Mg(2+) pocket.

Belongs to the cytochrome c oxidase subunit 2 family. In terms of assembly, component of the cytochrome c oxidase (complex IV, CIV), a multisubunit enzyme composed of 14 subunits. The complex is composed of a catalytic core of 3 subunits MT-CO1, MT-CO2 and MT-CO3, encoded in the mitochondrial DNA, and 11 supernumerary subunits COX4I, COX5A, COX5B, COX6A, COX6B, COX6C, COX7A, COX7B, COX7C, COX8 and NDUFA4, which are encoded in the nuclear genome. The complex exists as a monomer or a dimer and forms supercomplexes (SCs) in the inner mitochondrial membrane with NADH-ubiquinone oxidoreductase (complex I, CI) and ubiquinol-cytochrome c oxidoreductase (cytochrome b-c1 complex, complex III, CIII), resulting in different assemblies (supercomplex SCI(1)III(2)IV(1) and megacomplex MCI(2)III(2)IV(2)). Found in a complex with TMEM177, COA6, COX18, COX20, SCO1 and SCO2. Interacts with TMEM177 in a COX20-dependent manner. Interacts with COX20. Interacts with COX16. The cofactor is Cu cation.

The protein resides in the mitochondrion inner membrane. It carries out the reaction 4 Fe(II)-[cytochrome c] + O2 + 8 H(+)(in) = 4 Fe(III)-[cytochrome c] + 2 H2O + 4 H(+)(out). Component of the cytochrome c oxidase, the last enzyme in the mitochondrial electron transport chain which drives oxidative phosphorylation. The respiratory chain contains 3 multisubunit complexes succinate dehydrogenase (complex II, CII), ubiquinol-cytochrome c oxidoreductase (cytochrome b-c1 complex, complex III, CIII) and cytochrome c oxidase (complex IV, CIV), that cooperate to transfer electrons derived from NADH and succinate to molecular oxygen, creating an electrochemical gradient over the inner membrane that drives transmembrane transport and the ATP synthase. Cytochrome c oxidase is the component of the respiratory chain that catalyzes the reduction of oxygen to water. Electrons originating from reduced cytochrome c in the intermembrane space (IMS) are transferred via the dinuclear copper A center (CU(A)) of subunit 2 and heme A of subunit 1 to the active site in subunit 1, a binuclear center (BNC) formed by heme A3 and copper B (CU(B)). The BNC reduces molecular oxygen to 2 water molecules using 4 electrons from cytochrome c in the IMS and 4 protons from the mitochondrial matrix. This Casuarius bennetti (Dwarf cassowary) protein is Cytochrome c oxidase subunit 2 (MT-CO2).